The chain runs to 147 residues: Histone H3.X (147 aa).

Residues 1–16 show a composition bias toward low complexity; that stretch reads MARTKQTARKATAWQA. Residues 1–43 form a disordered region; the sequence is MARTKQTARKATAWQAPRKPLATKAARKRASPTGGIKKPHRYK. Position 3 is an asymmetric dimethylarginine (Arg3). Residue Arg3 is modified to Citrulline; alternate. Residue Thr4 is modified to Phosphothreonine. Lys5 carries the post-translational modification Allysine; alternate. An N6,N6,N6-trimethyllysine; alternate modification is found at Lys5. N6,N6-dimethyllysine; alternate is present on Lys5. Position 5 is an N6-(2-hydroxyisobutyryl)lysine; alternate (Lys5). Lys5 bears the N6-(beta-hydroxybutyryl)lysine; alternate mark. The residue at position 5 (Lys5) is an N6-acetyllysine; alternate. The residue at position 5 (Lys5) is an N6-crotonyllysine; alternate. Lys5 bears the N6-methyllysine; alternate mark. Gln6 carries the post-translational modification 5-glutamyl dopamine; alternate. The residue at position 6 (Gln6) is a 5-glutamyl serotonin; alternate. At Thr7 the chain carries Phosphothreonine. A Citrulline; alternate modification is found at Arg9. Arg9 is modified (symmetric dimethylarginine). Position 10 is an N6,N6,N6-trimethyllysine; alternate (Lys10). At Lys10 the chain carries N6,N6-dimethyllysine; alternate. Lys10 is subject to N6-(2-hydroxyisobutyryl)lysine; alternate. An N6-(beta-hydroxybutyryl)lysine; alternate modification is found at Lys10. Lys10 is modified (N6-acetyllysine; alternate). Lys10 is modified (N6-crotonyllysine; alternate). Position 10 is an N6-methyllysine; alternate (Lys10). An N6-butyryllysine; alternate modification is found at Lys10. Residue Lys10 is modified to N6-lactoyllysine; alternate. Thr12 is modified (phosphothreonine). At Arg18 the chain carries Asymmetric dimethylarginine. A Citrulline; alternate modification is found at Arg18. N6-(2-hydroxyisobutyryl)lysine; alternate is present on residues Lys19 and Lys24. Lys19 and Lys24 each carry N6-(beta-hydroxybutyryl)lysine; alternate. N6-acetyllysine; alternate is present on residues Lys19 and Lys24. N6-crotonyllysine; alternate occurs at positions 19 and 24. Residues Lys19 and Lys24 each carry the N6-methyllysine; alternate modification. Lys19 and Lys24 each carry N6-butyryllysine; alternate. N6-lactoyllysine; alternate is present on residues Lys19 and Lys24. Residues Lys19 and Lys24 each carry the N6-glutaryllysine; alternate modification. Arg27 is subject to Citrulline. Lys28 and Lys37 each carry N6,N6,N6-trimethyllysine; alternate. Lys28 and Lys37 each carry N6,N6-dimethyllysine; alternate. N6-(2-hydroxyisobutyryl)lysine; alternate is present on residues Lys28 and Lys37. At Lys28 the chain carries N6-(beta-hydroxybutyryl)lysine; alternate. N6-acetyllysine; alternate occurs at positions 28 and 37. Lys28 is subject to N6-crotonyllysine; alternate. N6-methyllysine; alternate occurs at positions 28 and 37. Lys28 bears the N6-lactoyllysine; alternate mark. Lys28 carries the post-translational modification N6-glutaryllysine; alternate. Lys38 carries the N6-methyllysine modification. A Phosphotyrosine modification is found at Tyr42. N6,N6,N6-trimethyllysine; alternate is present on Lys57. Lys57 carries the N6-(2-hydroxyisobutyryl)lysine; alternate modification. Lys57 is subject to N6-(beta-hydroxybutyryl)lysine; alternate. At Lys57 the chain carries N6-acetyllysine; alternate. Lys57 bears the N6-crotonyllysine; alternate mark. At Lys57 the chain carries N6-lactoyllysine; alternate. Residue Lys57 is modified to N6-glutaryllysine; alternate. Position 57 is an N6-methyllysine (Lys57). The residue at position 57 (Lys57) is an N6-succinyllysine; alternate. Position 58 is a phosphoserine (Ser58). The residue at position 65 (Lys65) is an N6-(2-hydroxyisobutyryl)lysine; alternate. Lys65 is subject to N6-methyllysine; alternate. Ser87 carries the phosphoserine modification. Thr108 is subject to Phosphothreonine.

It belongs to the histone H3 family. The nucleosome is a histone octamer containing two molecules each of H2A, H2B, H3 and H4 assembled in one H3-H4 heterotetramer and two H2A-H2B heterodimers. The octamer wraps approximately 147 bp of DNA. Acetylation is generally linked to gene activation. Acetylation on Lys-10 (H3K9ac) impairs methylation at Arg-9 (H3R8me2s). Acetylation on Lys-19 (H3K18ac) and Lys-24 (H3K24ac) favors methylation at Arg-18 (H3R17me). In terms of processing, citrullination at Arg-9 (H3R8ci) and/or Arg-18 (H3R17ci) impairs methylation and represses transcription. Post-translationally, asymmetric dimethylation at Arg-18 (H3R17me2a) is linked to gene activation. Symmetric dimethylation at Arg-9 (H3R8me2s) is linked to gene repression. Asymmetric dimethylation at Arg-3 (H3R2me2a) is linked to gene repression and is mutually exclusive with H3 Lys-5 methylation (H3K4me2 and H3K4me3). H3R2me2a is present at the 3' of genes regardless of their transcription state and is enriched on inactive promoters, while it is absent on active promoters. Methylation at Lys-5 (H3K4me) facilitates subsequent acetylation of H3 and H4. Methylation at Lys-10 (H3K9me) and Lys-28 (H3K27me), which are linked to gene repression, are underrepresented. Methylation at Lys-10 (H3K9me) is a specific target for HP1 proteins (CBX1, CBX3 and CBX5) and prevents subsequent acetylation of H3 and H4. In terms of processing, phosphorylation at Thr-7 (H3T6ph) is a specific tag for epigenetic transcriptional activation that prevents demethylation of Lys-5 (H3K4me) by LSD1/KDM1A. At centromeres, specifically phosphorylated at Thr-12 (H3T11ph) from prophase to early anaphase. Phosphorylation at Thr-12 (H3T11ph) is a specific tag for epigenetic transcriptional activation that promotes demethylation of Lys-10 (H3K9me). Phosphorylation at Tyr-42 (H3Y41ph) promotes exclusion of CBX5 (HP1 alpha) from chromatin. Post-translationally, lysine deamination at Lys-5 (H3K4all) to form allysine. Allysine formation only takes place on H3K4me3 and results in gene repression. Crotonylation (Kcr) is specifically present in male germ cells and marks testis-specific genes in post-meiotic cells, including X-linked genes that escape sex chromosome inactivation in haploid cells. Crotonylation marks active promoters and enhancers and confers resistance to transcriptional repressors. It is also associated with post-meiotically activated genes on autosomes. In terms of processing, butyrylation of histones marks active promoters and competes with histone acetylation. It is present during late spermatogenesis. In terms of tissue distribution, expressed at low level in some tissues, such as testis and brain.

The protein resides in the nucleus. It is found in the chromosome. Functionally, primate-specific variant histone H3, which constitutes a core component of nucleosomes. Nucleosomes wrap and compact DNA into chromatin, limiting DNA accessibility to the cellular machineries which require DNA as a template. Histones thereby play a central role in transcription regulation, DNA repair, DNA replication and chromosomal stability. DNA accessibility is regulated via a complex set of post-translational modifications of histones, also called histone code, and nucleosome remodeling. The chain is Histone H3.X from Homo sapiens (Human).